The sequence spans 847 residues: DNA mismatch repair protein MutS (847 aa).

Glycine 602–serine 609 is an ATP binding site.

It belongs to the DNA mismatch repair MutS family.

Functionally, this protein is involved in the repair of mismatches in DNA. It is possible that it carries out the mismatch recognition step. This protein has a weak ATPase activity. The protein is DNA mismatch repair protein MutS of Streptococcus uberis (strain ATCC BAA-854 / 0140J).